Reading from the N-terminus, the 479-residue chain is ATP synthase subunit beta (479 aa).

153–160 (GGAGVGKT) is an ATP binding site.

It belongs to the ATPase alpha/beta chains family. F-type ATPases have 2 components, CF(1) - the catalytic core - and CF(0) - the membrane proton channel. CF(1) has five subunits: alpha(3), beta(3), gamma(1), delta(1), epsilon(1). CF(0) has three main subunits: a(1), b(2) and c(9-12). The alpha and beta chains form an alternating ring which encloses part of the gamma chain. CF(1) is attached to CF(0) by a central stalk formed by the gamma and epsilon chains, while a peripheral stalk is formed by the delta and b chains.

The protein localises to the cell membrane. It carries out the reaction ATP + H2O + 4 H(+)(in) = ADP + phosphate + 5 H(+)(out). Functionally, produces ATP from ADP in the presence of a proton gradient across the membrane. The catalytic sites are hosted primarily by the beta subunits. The protein is ATP synthase subunit beta of Lactobacillus delbrueckii subsp. bulgaricus (strain ATCC 11842 / DSM 20081 / BCRC 10696 / JCM 1002 / NBRC 13953 / NCIMB 11778 / NCTC 12712 / WDCM 00102 / Lb 14).